Consider the following 1049-residue polypeptide: Presequence protease, mitochondrial (1049 aa).

A mitochondrion-targeting transit peptide spans 1-39; it reads MLRSYLHLGRHRTPAFRQPLGRLLRPTASILQYAQSRTL. H113 is a Zn(2+) binding site. Catalysis depends on E116, which acts as the Proton acceptor. Residue H117 coordinates Zn(2+). E189 is a catalytic residue. E222 lines the Zn(2+) pocket.

Belongs to the peptidase M16 family. PreP subfamily. Monomer and homodimer; homodimerization is induced by binding of the substrate. It depends on Zn(2+) as a cofactor.

It localises to the mitochondrion intermembrane space. The protein localises to the mitochondrion matrix. Functionally, degrades mitochondrial transit peptides after their cleavage in the intermembrane space or in the matrix, and presequence peptides; clearance of these peptides is required to keep the presequence processing machinery running. Preferentially cleaves the N-terminal side of paired basic amino acid residues. Also degrades other unstructured peptides. May function as an ATP-dependent peptidase as opposed to a metalloendopeptidase. This Emericella nidulans (strain FGSC A4 / ATCC 38163 / CBS 112.46 / NRRL 194 / M139) (Aspergillus nidulans) protein is Presequence protease, mitochondrial (cym1).